The primary structure comprises 92 residues: PqqA binding protein (92 aa).

Belongs to the PqqD family. In terms of assembly, monomer. Interacts with PqqE.

It functions in the pathway cofactor biosynthesis; pyrroloquinoline quinone biosynthesis. Functionally, functions as a PqqA binding protein and presents PqqA to PqqE, in the pyrroloquinoline quinone (PQQ) biosynthetic pathway. This chain is PqqA binding protein, found in Xanthomonas axonopodis pv. citri (strain 306).